The sequence spans 808 residues: MAAKLARLHSLRERLGATFSSHPNELIALFSRYVNQGKGMLQRHQLLAEFDALIEADKEKYAPFEDILRAAQEAIVLPPWVALAIRPRPGVWDYIRVNVSELAVEELSVSEYLAFKEQLVDGHTNSNFVLELDFEPFNASFPRPSMSKSIGNGVQFLNRHLSSKLFQDKESLYPLLNFLKAHNHKGTTMMLNDRIQSLRGLQSSLRKAEEYLMGIPQDTPYSEFNHRFQELGLEKGWGDCAKRVLDTIHLLLDLLEAPDPANLEKFLGTIPMMFNVVILSPHGYFAQSNVLGYPDTGGQVVYILDQVRALENEMLLRIKQQGLDITPKILIVTRLLPDAVGTTCGQRVEKVIGTEHTDILRVPFRSENGILRKWISRFDVWPFLETYTEDVANEIMREMQAKPDLIIGNYSDGNLVATLLAHKLGVTQCTIAHALEKTKYPNSDIYLDKFDSQYHFSCQFTADLIAMNHTDFIITSTFQEIAGSKDTVGQYESHIAFTLPGLYRVVHGIDVFDPKFNIVSPGADMSVYFPYTEADKRLTAFHPEIEELLYSEVENDEHKFVLKDKNKPIIFSMARLDRVKNMTGLVEMYGKNAHLRDLANLVIVCGDHGNQSKDREEQAEFKKMYGLIDQYKLKGHIRWISAQMNRVRNGELYRYICDTKGVFVQPAFYEAFGLTVIEAMTCGLPTIATCHGGPAEIIVDGVSGLHIDPYHSDKAADILVNFFEKCKQDSTYWDNISQGGLQRIYEKYTWKLYSERLMTLTGVYGFWKYVSNLERRETRRYIEMFYALKYRSLASAVPLAVDGESTSK.

S10 bears the Phosphoserine; by CPK mark. Residues 272-749 (MMFNVVILSP…GLQRIYEKYT (478 aa)) form a GT-B glycosyltransferase region.

The protein belongs to the glycosyltransferase 1 family. Plant sucrose synthase subfamily. Homotetramer or heterotetramer with SUS1. Phosphorylated at Ser-10 by CPK23 in developing seeds. Predominantly expressed in the leaf tissues. Expressed in seeds, and at lower levels in roots. Expressed in leaf mesophyll and phloem (at protein level).

The enzyme catalyses an NDP-alpha-D-glucose + D-fructose = a ribonucleoside 5'-diphosphate + sucrose + H(+). Activated by phosphorylation at Ser-10 by CPK23. In terms of biological role, sucrose-cleaving enzyme that provides UDP-glucose and fructose for various metabolic pathways. Functions in developing seeds by supplying substrates for the biosynthesis of storage products. The sequence is that of Sucrose synthase 2 (SUS2) from Oryza sativa subsp. japonica (Rice).